The sequence spans 342 residues: 4-amino-5-hydroxymethyl-2-methylpyrimidine phosphate synthase (342 aa).

At lysine 62 the chain carries N6-(pyridoxal phosphate)lysine. Residue histidine 66 is part of the active site. 115-118 provides a ligand contact to pyridoxal 5'-phosphate; sequence GEFG. The CCCFC; essential for catalytic activity, may be the site of iron coordination motif lies at 195–199; sequence CCCFC.

The protein belongs to the NMT1/THI5 family. In terms of assembly, homodimer. It depends on Fe cation as a cofactor.

It carries out the reaction N(6)-(pyridoxal phosphate)-L-lysyl-[4-amino-5-hydroxymethyl-2-methylpyrimidine phosphate synthase] + L-histidyl-[4-amino-5-hydroxymethyl-2-methylpyrimidine phosphate synthase] + 2 Fe(3+) + 4 H2O = L-lysyl-[4-amino-5-hydroxymethyl-2-methylpyrimidine phosphate synthase] + (2S)-2-amino-5-hydroxy-4-oxopentanoyl-[4-amino-5-hydroxymethyl-2-methylpyrimidine phosphate synthase] + 4-amino-2-methyl-5-(phosphooxymethyl)pyrimidine + 3-oxopropanoate + 2 Fe(2+) + 2 H(+). It participates in cofactor biosynthesis; thiamine diphosphate biosynthesis. In terms of biological role, responsible for the formation of the pyrimidine heterocycle in the thiamine biosynthesis pathway. Catalyzes the formation of hydroxymethylpyrimidine phosphate (HMP-P) from histidine and pyridoxal phosphate (PLP). The protein uses PLP and the active site histidine to form HMP-P, generating an inactive enzyme. The enzyme can only undergo a single turnover, which suggests it is a suicide enzyme. The sequence is that of 4-amino-5-hydroxymethyl-2-methylpyrimidine phosphate synthase from Aspergillus parasiticus.